A 685-amino-acid polypeptide reads, in one-letter code: Probable cysteine desulfurase (685 aa).

A cargo-loading domain region spans residues 1–282 (MTRSPCSTTS…RDEHEVFDVA (282 aa)). 2 disordered regions span residues 48–135 (SIRP…TSAG) and 162–185 (PTPA…VPDT). The segment covering 71–85 (ATAATSAGRTAAGTA) has biased composition (low complexity). Residues 102–121 (LPPPASPAPEAPPQAAPPAP) show a composition bias toward pro residues. Residues 122–135 (RGSAPDATAATSAG) show a composition bias toward low complexity. Positions 164 to 178 (PAGPEAPPQSAPPAP) are enriched in pro residues. N6-(pyridoxal phosphate)lysine is present on Lys502. The active-site Cysteine persulfide intermediate is the Cys640.

This sequence belongs to the class-V pyridoxal-phosphate-dependent aminotransferase family. Csd subfamily. In terms of assembly, isolated from bacteria in a complex with encapsulin 2A (AC I3NID5), strongly suggesting it is found in a type 2A encapsulin nanocompartment. There are 1-2 copies of this protein in each encapsulin shell. It depends on pyridoxal 5'-phosphate as a cofactor.

It is found in the encapsulin nanocompartment. Its subcellular location is the cell membrane. The enzyme catalyses (sulfur carrier)-H + L-cysteine = (sulfur carrier)-SH + L-alanine. Functionally, cargo protein of a type 2A encapsulin nanocompartment involved in sulfur metabolism. Cysteine desulfurases mobilize the sulfur from L-cysteine to yield L-alanine, an essential step in sulfur metabolism for biosynthesis of a variety of sulfur-containing biomolecules. This is Probable cysteine desulfurase from Mycolicibacterium paratuberculosis (strain ATCC BAA-968 / K-10) (Mycobacterium paratuberculosis).